The sequence spans 487 residues: Probable glycine dehydrogenase (decarboxylating) subunit 2 (487 aa).

K269 is subject to N6-(pyridoxal phosphate)lysine.

This sequence belongs to the GcvP family. C-terminal subunit subfamily. As to quaternary structure, the glycine cleavage system is composed of four proteins: P, T, L and H. In this organism, the P 'protein' is a heterodimer of two subunits. Requires pyridoxal 5'-phosphate as cofactor.

The enzyme catalyses N(6)-[(R)-lipoyl]-L-lysyl-[glycine-cleavage complex H protein] + glycine + H(+) = N(6)-[(R)-S(8)-aminomethyldihydrolipoyl]-L-lysyl-[glycine-cleavage complex H protein] + CO2. The glycine cleavage system catalyzes the degradation of glycine. The P protein binds the alpha-amino group of glycine through its pyridoxal phosphate cofactor; CO(2) is released and the remaining methylamine moiety is then transferred to the lipoamide cofactor of the H protein. The polypeptide is Probable glycine dehydrogenase (decarboxylating) subunit 2 (Prosthecochloris aestuarii (strain DSM 271 / SK 413)).